We begin with the raw amino-acid sequence, 309 residues long: Probable WRKY transcription factor 26 (309 aa).

The segment at 1-24 (MGSFDRQRAVPKFKTATPSPLPLS) is disordered. The segment at residues 111 to 176 (SSNKTSDDGY…YKGSHNHPKP (66 aa)) is a DNA-binding region (WRKY 1). The Zn(2+) site is built by C142, C147, H171, and H173. The disordered stretch occupies residues 167–210 (YKGSHNHPKPQSTKRSSSTAIAAHQNSSNGDGKDIGEDETEAKR). Over residues 175 to 196 (KPQSTKRSSSTAIAAHQNSSNG) the composition is skewed to polar residues. Residues 197 to 210 (DGKDIGEDETEAKR) are compositionally biased toward basic and acidic residues. The segment at residues 228–293 (SDIDILDDGY…YEGKHKHQIP (66 aa)) is a DNA-binding region (WRKY 2). Zn(2+) is bound by residues C259, C264, H288, and H290.

This sequence belongs to the WRKY group I family. As to quaternary structure, interacts with VQ10.

The protein resides in the nucleus. Functionally, transcription factor. Interacts specifically with the W box (5'-(T)TGAC[CT]-3'), a frequently occurring elicitor-responsive cis-acting element. Functions with WRKY25 and WRKY33 as positive regulator of plant thermotolerance by partially participating in ethylene-response signal transduction pathway. This Arabidopsis thaliana (Mouse-ear cress) protein is Probable WRKY transcription factor 26 (WRKY26).